We begin with the raw amino-acid sequence, 99 residues long: RNA-binding protein Hfq (99 aa).

In terms of domain architecture, Sm spans 9–68; sequence DPFLNALRRERVPVSIYLVNGIKLQGQIESFDQFVILLKNTVSQMVYKHAISTVVPSRPV. The tract at residues 64–99 is disordered; it reads PSRPVSHHSNNPGGSNNYHGSNTTAQQQSQDADDAE. Over residues 70–93 the composition is skewed to low complexity; that stretch reads HHSNNPGGSNNYHGSNTTAQQQSQ.

Belongs to the Hfq family. In terms of assembly, homohexamer.

In terms of biological role, RNA chaperone that binds small regulatory RNA (sRNAs) and mRNAs to facilitate mRNA translational regulation in response to envelope stress, environmental stress and changes in metabolite concentrations. Also binds with high specificity to tRNAs. The sequence is that of RNA-binding protein Hfq from Pectobacterium atrosepticum (strain SCRI 1043 / ATCC BAA-672) (Erwinia carotovora subsp. atroseptica).